A 182-amino-acid chain; its full sequence is Adenine phosphoribosyltransferase (182 aa).

It belongs to the purine/pyrimidine phosphoribosyltransferase family. As to quaternary structure, homodimer.

The protein resides in the cytoplasm. The catalysed reaction is AMP + diphosphate = 5-phospho-alpha-D-ribose 1-diphosphate + adenine. It functions in the pathway purine metabolism; AMP biosynthesis via salvage pathway; AMP from adenine: step 1/1. Its function is as follows. Catalyzes a salvage reaction resulting in the formation of AMP, that is energically less costly than de novo synthesis. This chain is Adenine phosphoribosyltransferase, found in Pseudomonas aeruginosa (strain LESB58).